Consider the following 236-residue polypeptide: Phosphoribosylaminoimidazole-succinocarboxamide synthase (236 aa).

It belongs to the SAICAR synthetase family.

It catalyses the reaction 5-amino-1-(5-phospho-D-ribosyl)imidazole-4-carboxylate + L-aspartate + ATP = (2S)-2-[5-amino-1-(5-phospho-beta-D-ribosyl)imidazole-4-carboxamido]succinate + ADP + phosphate + 2 H(+). It participates in purine metabolism; IMP biosynthesis via de novo pathway; 5-amino-1-(5-phospho-D-ribosyl)imidazole-4-carboxamide from 5-amino-1-(5-phospho-D-ribosyl)imidazole-4-carboxylate: step 1/2. The sequence is that of Phosphoribosylaminoimidazole-succinocarboxamide synthase from Cellvibrio japonicus (strain Ueda107) (Pseudomonas fluorescens subsp. cellulosa).